The sequence spans 459 residues: MAHSRARRRKRASATQLYQTCKLTGTCPPDVIPKVEHNTIADQILKWGSLGVFFGGLGIGTGSGTGGRTGYVPLQTSAKPSITSGPMARPPVVVEPVAPSDPSIVSLIEESAIINAGAPEIVPPAHGGFTITSSETTTPAILDVSVTSHTTTSIFRNPVFTEPSVTQPQPPVEANGHILISAPTVTSHPIEEIPLDTFVVSSSDSGPTSSTPVPGTAPRPRVGLYSRALHQVQVTDPAFLSTPQRLITYDNPVYEGEDVSVQFSHDSIHNAPDEAFMDIIRLHRPAIASRRGLVRYSRIGQRGSMHTRSGKHIGARIHYFYDISPIAQAAEEIEMHPLVAAQDDTFDIYAESFEPGINPTQHPVTNISDTYLTSTPNTVTQPWGNTTVPLSLPNDLFLQSGPDITFPTAPMGTPFSPVTPALPTGPVFITGSGFYLHPAWYFARKRRKRIPLFFSDVAA.

The Nuclear localization signal signature appears at 1–12 (MAHSRARRRKRA). Cys21 and Cys27 are disulfide-bonded. A Nuclear localization signal motif is present at residues 442-450 (FARKRRKRI).

Belongs to the papillomaviridae L2 protein family. In terms of assembly, interacts with major capsid protein L1. Interacts with E2; this interaction inhibits E2 transcriptional activity but not the DNA replication function E2. Interacts with host GADD45GIP1. Interacts with host HSPA8; this interaction is required for L2 nuclear translocation. Interacts with host importins KPNB2 and KPNB3. Forms a complex with importin alpha2-beta1 heterodimers via interaction with the importin alpha2 adapter. Interacts with host DYNLT1; this interaction is essential for virus intracellular transport during entry. Interacts (via C-terminus) with host retromer subunits VPS35 and VPS29. Post-translationally, highly phosphorylated.

It is found in the virion. The protein resides in the host nucleus. The protein localises to the host early endosome. It localises to the host Golgi apparatus. Its function is as follows. Minor protein of the capsid that localizes along the inner surface of the virion, within the central cavities beneath the L1 pentamers. Plays a role in capsid stabilization through interaction with the major capsid protein L1. Once the virion enters the host cell, L2 escorts the genomic DNA into the nucleus by promoting escape from the endosomal compartments and traffic through the host Golgi network. Mechanistically, the C-terminus of L2 possesses a cell-penetrating peptide that protudes from the host endosome, interacts with host cytoplasmic retromer cargo and thereby mediates the capsid delivery to the host trans-Golgi network. Plays a role through its interaction with host dynein in the intracellular microtubule-dependent transport of viral capsid toward the nucleus. Mediates the viral genome import into the nucleus through binding to host importins. Once within the nucleus, L2 localizes viral genomes to host PML bodies in order to activate early gene expression for establishment of infection. Later on, promotes late gene expression by interacting with the viral E2 protein and by inhibiting its transcriptional activation functions. During virion assembly, encapsidates the genome by direct interaction with the viral DNA. The chain is Minor capsid protein L2 from Homo sapiens (Human).